A 361-amino-acid chain; its full sequence is MATAASNPYSILSSSSLVHADSAVMQQGSPFRNPQKLLQSDYLQGVPCNGHPLGHHWVTSLSDANPWSSSLASSPLDQQDIKPGREDLQLGAIIHHRSPHVNHHSPHTNHPNAWGASPAHNSSLTSSGQPINIYSQPSFTVSGMLDHGELTPPLPAGTTQSLHPVLREPNDHVDLGSHHCQDHSDEETPTSDELEQFAKQFKQRRIKLGFTQADVGLALGTLYGNVFSQTTICRFEALQLSFKNMCKLKPLLNKWLEEADSSTGNPTSIDKIAAQGRKRKKRTSIEVSVKGVLETHFLKCPKPAALEITSLADSLQLEKEVVRVWFCNRRQKEKRMTPPGDPQQHEVYSHSVKTDTSCNEL.

3 disordered regions span residues 100 to 131, 150 to 189, and 333 to 361; these read HVNH…GQPI, LTPP…EETP, and EKRM…CNEL. A compositionally biased stretch (polar residues) spans 119–131; sequence AHNSSLTSSGQPI. Residues 165 to 183 are compositionally biased toward basic and acidic residues; it reads VLREPNDHVDLGSHHCQDH. Positions 186–260 constitute a POU-specific domain; sequence EETPTSDELE…LLNKWLEEAD (75 aa). The homeobox DNA-binding region spans 278 to 337; it reads KRKKRTSIEVSVKGVLETHFLKCPKPAALEITSLADSLQLEKEVVRVWFCNRRQKEKRMT.

It belongs to the POU transcription factor family. Class-3 subfamily. In terms of tissue distribution, from embryonic stage 10, expressed in the Spemann's organizer. During gastrulation, expressed in both the involuting mesoderm and the overlying neuroectoderm. During the neural plate and neural fold stages, expressed in the entire neuroectoderm with expression in discrete regions of the developing nervous system persisting at later stages. Transiently expressed in the pronephros from stages 24-32. In adults, expressed in the kidney and brain.

The protein resides in the nucleus. Transcriptional activator. Induces neural-specific gene expression to act as a key regulator of neural differentiation. This Xenopus laevis (African clawed frog) protein is POU domain, class 3, transcription factor 4-A (pou3f4-a).